Reading from the N-terminus, the 137-residue chain is Large-conductance mechanosensitive channel (137 aa).

Helical transmembrane passes span 15–35 (VDLA…TSLV) and 81–101 (GKFI…FFVI).

Belongs to the MscL family. Homopentamer.

Its subcellular location is the cell inner membrane. Its function is as follows. Channel that opens in response to stretch forces in the membrane lipid bilayer. May participate in the regulation of osmotic pressure changes within the cell. The polypeptide is Large-conductance mechanosensitive channel (Hyphomonas neptunium (strain ATCC 15444)).